The sequence spans 72 residues: Small, acid-soluble spore protein C (72 aa).

Belongs to the alpha/beta-type SASP family.

In terms of biological role, SASP are bound to spore DNA. They are double-stranded DNA-binding proteins that cause DNA to change to an a-like conformation. They protect the DNA backbone from chemical and enzymatic cleavage and are thus involved in dormant spore's high resistance to UV light. This is Small, acid-soluble spore protein C (sasP-C) from Priestia megaterium (Bacillus megaterium).